Consider the following 94-residue polypeptide: MNHYVYILECKDGSWYTGYTTDVDRRIKKHASGKGAKYTRGRGPFRLVATWAFPSKEEAMRWEYEVKHLSRRKKEQLVSLKGGPYENTTKLSTT.

The GIY-YIG domain maps to 1-76 (MNHYVYILEC…KHLSRRKKEQ (76 aa)).

Belongs to the UPF0213 family.

The sequence is that of UPF0213 protein BH0048 from Halalkalibacterium halodurans (strain ATCC BAA-125 / DSM 18197 / FERM 7344 / JCM 9153 / C-125) (Bacillus halodurans).